The following is a 201-amino-acid chain: Peptidyl-tRNA hydrolase (201 aa).

Residue Tyr-17 participates in tRNA binding. The active-site Proton acceptor is the His-22. Residues Phe-76, Asn-78, and Asn-124 each contribute to the tRNA site.

This sequence belongs to the PTH family. In terms of assembly, monomer.

Its subcellular location is the cytoplasm. The catalysed reaction is an N-acyl-L-alpha-aminoacyl-tRNA + H2O = an N-acyl-L-amino acid + a tRNA + H(+). In terms of biological role, hydrolyzes ribosome-free peptidyl-tRNAs (with 1 or more amino acids incorporated), which drop off the ribosome during protein synthesis, or as a result of ribosome stalling. Catalyzes the release of premature peptidyl moieties from peptidyl-tRNA molecules trapped in stalled 50S ribosomal subunits, and thus maintains levels of free tRNAs and 50S ribosomes. The polypeptide is Peptidyl-tRNA hydrolase (Nitratidesulfovibrio vulgaris (strain ATCC 29579 / DSM 644 / CCUG 34227 / NCIMB 8303 / VKM B-1760 / Hildenborough) (Desulfovibrio vulgaris)).